The following is a 275-amino-acid chain: MGLKKFKPVTPGRRFMLIPDYSEITKTEPEKSLLVPLKKKAGRNHHGHVTVRHQGGGHKRMYRIIDFKRNKFGIPARVASIEYDPNRTARIALLVYADGEKRYILAPKGLKVGDTIMNGPDAEITVGNALPLANIPVGTIVHNIEFIPGKGGQIARSAGTYAQLMAKEGRYALLRMPSGELRKVLVTCMATIGMVGNEDHSNEVHGKAGRKRWLGIRPTVRGMTMNPVDHPMGGGEGRSKGHIPQSPWGIPAKGYKTRKSKKPSDKLIVKRRKQK.

The tract at residues 221-275 (RGMTMNPVDHPMGGGEGRSKGHIPQSPWGIPAKGYKTRKSKKPSDKLIVKRRKQK) is disordered.

This sequence belongs to the universal ribosomal protein uL2 family. As to quaternary structure, part of the 50S ribosomal subunit. Forms a bridge to the 30S subunit in the 70S ribosome.

Functionally, one of the primary rRNA binding proteins. Required for association of the 30S and 50S subunits to form the 70S ribosome, for tRNA binding and peptide bond formation. It has been suggested to have peptidyltransferase activity; this is somewhat controversial. Makes several contacts with the 16S rRNA in the 70S ribosome. This Kosmotoga olearia (strain ATCC BAA-1733 / DSM 21960 / TBF 19.5.1) protein is Large ribosomal subunit protein uL2.